A 388-amino-acid chain; its full sequence is Tryptophan synthase beta chain (388 aa).

Lysine 86 carries the post-translational modification N6-(pyridoxal phosphate)lysine.

It belongs to the TrpB family. Tetramer of two alpha and two beta chains. It depends on pyridoxal 5'-phosphate as a cofactor.

It carries out the reaction (1S,2R)-1-C-(indol-3-yl)glycerol 3-phosphate + L-serine = D-glyceraldehyde 3-phosphate + L-tryptophan + H2O. The protein operates within amino-acid biosynthesis; L-tryptophan biosynthesis; L-tryptophan from chorismate: step 5/5. The beta subunit is responsible for the synthesis of L-tryptophan from indole and L-serine. The sequence is that of Tryptophan synthase beta chain (trpB) from Buchnera aphidicola subsp. Acyrthosiphon pisum (strain APS) (Acyrthosiphon pisum symbiotic bacterium).